The chain runs to 318 residues: MAEALVLVEHTEGALKKVSAELITAARVLGEPAAVVVGTPGTSAPLVDGLKTAGAAKIYVAESDAADKYLITPVVDVLAALAESSAPAAVLLAATADGKEIGGRLAARIGSGLLVDVVDVREGAVGVHSVFGGVFIVEAQANGDTPVITVRAGAVEAQPAEGAGEQVSVEVPAPAENATKITARAPAVVDNRPDLTEATVVVSGGRGVGSADNFSVVEALADSLGAAVGASRAAVDSGYYPGQFQIGQTGKTVSPQLYIALGISGAIQHRAGMQTSKTIVAVNKDEEAPIFEIADFGVVGDLFKVAPQLTDGIKARKG.

Position 257–285 (257–285 (LYIALGISGAIQHRAGMQTSKTIVAVNKD)) interacts with FAD.

It belongs to the ETF alpha-subunit/FixB family. As to quaternary structure, heterodimer of an alpha and a beta subunit. FAD is required as a cofactor.

The electron transfer flavoprotein serves as a specific electron acceptor for other dehydrogenases. It transfers the electrons to the main respiratory chain via ETF-ubiquinone oxidoreductase (ETF dehydrogenase). This chain is Electron transfer flavoprotein subunit alpha (etfA), found in Mycobacterium leprae (strain TN).